We begin with the raw amino-acid sequence, 225 residues long: Ribosome maturation factor RimP (225 aa).

The protein belongs to the RimP family.

It is found in the cytoplasm. Its function is as follows. Required for maturation of 30S ribosomal subunits. The polypeptide is Ribosome maturation factor RimP (Rhodospirillum rubrum (strain ATCC 11170 / ATH 1.1.1 / DSM 467 / LMG 4362 / NCIMB 8255 / S1)).